Here is an 843-residue protein sequence, read N- to C-terminus: Elongation factor 2 (843 aa).

In terms of domain architecture, tr-type G spans 17-344; sequence HNIRNMSVIA…MMIFHLPSPH (328 aa). Residues 26-33 and 158-161 contribute to the GTP site; these read AHVDHGKS and NKMD. A Diphthamide modification is found at His700. Ser837 bears the Phosphoserine mark.

It belongs to the TRAFAC class translation factor GTPase superfamily. Classic translation factor GTPase family. May interact with glutaredoxins (Grxs). As to expression, expressed in root, stem, leaves, flowers and siliques.

It is found in the cytoplasm. The enzyme catalyses GTP + H2O = GDP + phosphate + H(+). It participates in protein biosynthesis; polypeptide chain elongation. Its function is as follows. Catalyzes the GTP-dependent ribosomal translocation step during translation elongation. During this step, the ribosome changes from the pre-translocational (PRE) to the post-translocational (POST) state as the newly formed A-site-bound peptidyl-tRNA and P-site-bound deacylated tRNA move to the P and E sites, respectively. Catalyzes the coordinated movement of the two tRNA molecules, the mRNA and conformational changes in the ribosome. Involved in cold responses leading to freezing tolerance via the induction of cold-responsive genes. This is Elongation factor 2 from Arabidopsis thaliana (Mouse-ear cress).